Here is a 999-residue protein sequence, read N- to C-terminus: RING finger domain and kelch repeat-containing protein DDB_G0271372 (999 aa).

The RING-type zinc-finger motif lies at 7-49 (CPNCLKVFNNPRQLECDHILCTRCIEGVYNPGRTPIIKCPVCD). Low complexity predominate over residues 92 to 143 (STGSSNNNNNNNNNNNNNNNNFVINNSNNKNNGATTTTTTTTTTTNSNSNST). 2 disordered regions span residues 92-147 (STGS…KSKV) and 159-209 (ASPK…SSPP). Polar residues predominate over residues 165–196 (GSSQGSLTTINNQKKLTLSPQRASSTTTTSVN). Residues 258–302 (AELSKCNDHDQKKFTIFCTDCDQLLCDECLNNNQQQHENHQLNKI) form a B box-type zinc finger. Residues cysteine 263, histidine 266, cysteine 286, and histidine 294 each coordinate Zn(2+). Residues 355–402 (DIDTMIENLKERKNALISQIDKEYEEQKLELKDQIETINTTIVDIQNN) are a coiled coil. Composition is skewed to low complexity over residues 485 to 516 (GVSS…IITT) and 526 to 536 (SPSPTSSSSST). Positions 485 to 637 (GVSSSPTGTG…TSTNGSNTKI (153 aa)) are disordered. Over residues 552–612 (LSSQNYDNFG…SHGSKLNDNI (61 aa)) the composition is skewed to polar residues. Low complexity predominate over residues 613–635 (NTNNNNSPSPTSSSTTSTNGSNT). Kelch repeat units follow at residues 655–700 (ITAR…YDNN), 702–745 (TIYR…VFDG), 748–793 (YIYL…YHPT), 796–842 (CIYV…FDGS), and 844–892 (YINI…SMNL). Residues 904-924 (NSFSSISSHSSLNSSSSNNGI) show a composition bias toward low complexity. The tract at residues 904–936 (NSFSSISSHSSLNSSSSNNGISGSGGSGGDNEI) is disordered.

This chain is RING finger domain and kelch repeat-containing protein DDB_G0271372, found in Dictyostelium discoideum (Social amoeba).